The following is a 196-amino-acid chain: Endoribonuclease YbeY (196 aa).

H120, H124, and H130 together coordinate Zn(2+).

This sequence belongs to the endoribonuclease YbeY family. The cofactor is Zn(2+).

The protein resides in the cytoplasm. Its function is as follows. Single strand-specific metallo-endoribonuclease involved in late-stage 70S ribosome quality control and in maturation of the 3' terminus of the 16S rRNA. The polypeptide is Endoribonuclease YbeY (Corynebacterium glutamicum (strain ATCC 13032 / DSM 20300 / JCM 1318 / BCRC 11384 / CCUG 27702 / LMG 3730 / NBRC 12168 / NCIMB 10025 / NRRL B-2784 / 534)).